The chain runs to 579 residues: Glypican-2 (579 aa).

Residues 1–21 (MSALRPLLLLLLHLCPGLGPG) form the signal peptide. Residues serine 55, serine 92, and serine 155 are each glycosylated (O-linked (Xyl...) (heparan sulfate) serine). Disordered stretches follow at residues 347-382 (GTPH…PTTA) and 483-552 (ALGQ…GRSR). Residues 361–379 (APREEASRSWRASAEEERP) are compositionally biased toward basic and acidic residues. O-linked (Xyl...) (heparan sulfate) serine glycans are attached at residues serine 498 and serine 500. A compositionally biased stretch (pro residues) spans 517–527 (VVPPARPPRPP). Serine 556 carries the GPI-anchor amidated serine lipid modification. Residues 557–579 (SVGLHTPLVLLLLPSALTLLVLR) constitute a propeptide, removed in mature form.

This sequence belongs to the glypican family. As to quaternary structure, interacts (via heparan sulfate) with PTN; this interaction promotes neurite outgrowth through binding of PTN with chondroitin sulfate of proteoglycans, thereby releasing PTPRS of chondroitin sulfate proteoglycans (CSPGs) and leading to binding with heparan sulfate of GPC2. Interacts (heparan sulfate chain) with MDK; this interaction is inhibited by heparin followed by chondroitin sulfate E; this interaction induces GPC2 clustering through heparan sulfate chain; this interaction induces neuronal cell adhesion and neurite outgrowth.

It is found in the cell membrane. The protein localises to the secreted. It localises to the extracellular space. In terms of biological role, cell surface proteoglycan that bears heparan sulfate. May fulfill a function related to the motile behaviors of developing neurons. This chain is Glypican-2 (Gpc2), found in Mus musculus (Mouse).